A 256-amino-acid chain; its full sequence is Thiazole synthase (256 aa).

K96 acts as the Schiff-base intermediate with DXP in catalysis. Residues G157, 184 to 185, and 206 to 207 each bind 1-deoxy-D-xylulose 5-phosphate; these read AG and NT.

This sequence belongs to the ThiG family. In terms of assembly, homotetramer. Forms heterodimers with either ThiH or ThiS.

The protein resides in the cytoplasm. The enzyme catalyses [ThiS sulfur-carrier protein]-C-terminal-Gly-aminoethanethioate + 2-iminoacetate + 1-deoxy-D-xylulose 5-phosphate = [ThiS sulfur-carrier protein]-C-terminal Gly-Gly + 2-[(2R,5Z)-2-carboxy-4-methylthiazol-5(2H)-ylidene]ethyl phosphate + 2 H2O + H(+). The protein operates within cofactor biosynthesis; thiamine diphosphate biosynthesis. Catalyzes the rearrangement of 1-deoxy-D-xylulose 5-phosphate (DXP) to produce the thiazole phosphate moiety of thiamine. Sulfur is provided by the thiocarboxylate moiety of the carrier protein ThiS. In vitro, sulfur can be provided by H(2)S. In Brucella canis (strain ATCC 23365 / NCTC 10854 / RM-666), this protein is Thiazole synthase.